The sequence spans 732 residues: TIR domain-containing adapter molecule 1 (732 aa).

Residues 1–153 (MDNPGPSLRG…CSSDIKGDPS (153 aa)) form a TRIF-NTD region. A TRAF6-binding motif is present at residues 84–91 (EGPEEPPD). The interval 144-191 (CSSDIKGDPSGFQPLHSHQGSLQPPSASPAVTRSQPRPIDTPDWSWGH) is disordered. A compositionally biased stretch (polar residues) spans 159 to 178 (HSHQGSLQPPSASPAVTRSQ). A pLxIS motif motif is present at residues 206-209 (LEIS). Residue serine 209 is modified to Phosphoserine. A Glycyl lysine isopeptide (Lys-Gly) (interchain with G-Cter in ubiquitin) cross-link involves residue lysine 228. 2 consecutive short sequence motifs (TRAF6-binding) follow at residues 247–254 (QEPEEISW) and 296–306 (HCPIECTELST). The span at 305 to 331 (STNSRSPLTSTTESVGKQWPITSQRSP) shows a compositional bias: polar residues. The disordered stretch occupies residues 305 to 389 (STNSRSPLTS…TSTSPVLDHS (85 aa)). Residues 345 to 359 (SSSPPAQPPSLQASP) are compositionally biased toward low complexity. In terms of domain architecture, TIR spans 395–534 (KFYNFVVIHA…KVANTFKTQK (140 aa)). Residues 514–713 (WLDEHSPIFA…SSDDKTECSE (200 aa)) form a sufficient to induce apoptosis region. Disordered stretches follow at residues 603 to 679 (TPSW…GPQP) and 696 to 732 (MWGHTGAQSSDDKTECSENPCMGPLTDQGEPLLETPE). Composition is skewed to pro residues over residues 604-615 (PSWPGCPQPIPS) and 625-657 (PYSPQPPSFPQPPCFPQPPSFPQPPSFPLPPVS). Over residues 658 to 671 (SPQSQSFPSASSPA) the composition is skewed to low complexity.

In terms of assembly, homodimer. Found in a multi-helicase-TICAM1 complex at least composed of DHX36, DDX1, DDX21 and TICAM1; this complex exists in resting cells with or without poly(I:C) RNA ligand stimulation. Interacts (via TIR domain) with DDX21 (via C-terminus). Interacts (via TIR domain) with DHX36 (via C-terminus). Interacts with AZI2 and IRF7. Interacts (when phosphorylated) with IRF3; following activation and phosphorylation on the pLxIS motif by TBK1, recruits IRF3. Interacts with TICAM2 in TLR4 recruitment. Interaction with PIAS4 inhibits the TICAM1-induced NF-kappa-B, IRF and IFNB1 activation. Interacts with IKBKB and IKBKE. Interaction with SARM1 blocks TICAM1-dependent transcription factor activation. Interacts with TRAF3. Interacts with TRAFD1. Interacts with UBQLN1 (via UBA domain). Interacts with TBK1, TRAF6 and RIPK1 and these interactions are enhanced in the presence of WDFY1. Interacts (via the TIR domain) with TLR3 in response to poly(I:C) and this interaction is enhanced in the presence of WDFY1. Interacts with TLR4 in response to poly(I:C) in a WDFY1-dependent manner. Interacts with WDFY1 in response to poly(I:C). Interacts with TRIM56. Interacts (via the TIR domain) with TLR5. Interacts with TRIM8. Interacts with TAX1BP1 and TRIM32; these interactions target TICAM1 to TAX1BP1-mediated selective autophagic degradation. Interacts with DDX50. Phosphorylated by TBK1. Following activation, phosphorylated by TBK1 at Ser-209 in the pLxIS motif. The phosphorylated pLxIS motif constitutes an IRF3-binding motif, leading to recruitment of the transcription factor IRF3 to induce type-I interferons and other cytokines. Post-translationally, polyubiquitinated at Lys-228 by TRIM38 with 'Lys-48'-linked chains, leading to proteasomal degradation. Polyubiquitinated with 'Lys-6'- and 'Lys-33'-linked chains in a TRIM8-dependent manner; ubiquitination disrupts the interaction with TBK1 and subsequent interferon production.

It is found in the cytoplasm. The protein resides in the cytosol. It localises to the cytoplasmic vesicle. The protein localises to the autophagosome. Its subcellular location is the mitochondrion. Its function is as follows. Involved in innate immunity against invading pathogens. Adapter used by TLR3, TLR4 (through TICAM2) and TLR5 to mediate NF-kappa-B and interferon-regulatory factor (IRF) activation, and to induce apoptosis. Ligand binding to these receptors results in TRIF recruitment through its TIR domain. Distinct protein-interaction motifs allow recruitment of the effector proteins TBK1, TRAF6 and RIPK1, which in turn, lead to the activation of transcription factors IRF3 and IRF7, NF-kappa-B and FADD respectively. Phosphorylation by TBK1 on the pLxIS motif leads to recruitment and subsequent activation of the transcription factor IRF3 to induce expression of type I interferon and exert a potent immunity against invading pathogens. Component of a multi-helicase-TICAM1 complex that acts as a cytoplasmic sensor of viral double-stranded RNA (dsRNA) and plays a role in the activation of a cascade of antiviral responses including the induction of pro-inflammatory cytokines. This is TIR domain-containing adapter molecule 1 (Ticam1) from Mus musculus (Mouse).